The chain runs to 382 residues: Anhydro-N-acetylmuramic acid kinase (382 aa).

ATP is bound at residue glycine 9–aspartate 16.

The protein belongs to the anhydro-N-acetylmuramic acid kinase family.

It carries out the reaction 1,6-anhydro-N-acetyl-beta-muramate + ATP + H2O = N-acetyl-D-muramate 6-phosphate + ADP + H(+). Its pathway is amino-sugar metabolism; 1,6-anhydro-N-acetylmuramate degradation. It functions in the pathway cell wall biogenesis; peptidoglycan recycling. Functionally, catalyzes the specific phosphorylation of 1,6-anhydro-N-acetylmuramic acid (anhMurNAc) with the simultaneous cleavage of the 1,6-anhydro ring, generating MurNAc-6-P. Is required for the utilization of anhMurNAc either imported from the medium or derived from its own cell wall murein, and thus plays a role in cell wall recycling. The polypeptide is Anhydro-N-acetylmuramic acid kinase (Bacillus thuringiensis subsp. konkukian (strain 97-27)).